A 1912-amino-acid chain; its full sequence is MRGLISALVLTLVGSQHLNYQPDFGENKVYTYNYESILFSGIPEKGLARTGIRIRSEVEISGIGPKLCLIRIHSIEAAEYNGIWPTSSFSRSLKLTQALTGQLSIPIKFEYSNGHVGNLMAPDSVSDDGLNIYRGILNILELSLKKMQHSYSIQEAGIGGICNTTYAIQENKKANLVDVTKSKDLNSCEEKVQVVTGSAYTQPCQTCQQRNKNSRATATYNYKIKYTHNEAVITQAEVEEVHQFTPFHEITGGNAIVEARQKLALIEVQKQVAEVPPKEFQKRGSLQYQFGSELLQLPVHLFKIKDVERQIEERLQDLVETTYEQLPSDAPAKALKLMHLLRAANEENYESVWKQFSSRPAYRRYLLDLLPAAASHRSLRFLRHKMERQELTNWEIAQTVLVALHSSSPTQEVMEEATLIVKKHCPRSSSVLRKVCLLSYASLCHKRCSSPYSCSECLQVFHVFAGEALGKSNIEEVLLALKALGNVGHPASIKHIKKFLPGYAAGASELPLKVHETAVMALKSIGMRDPQMVQAITLEIFLNHKIHPRIRMLAAVVLLETKPGLPILMILVDAVLKEPSMQVASFIYSHLRALGRSTAPDLQMMASACRMAVRALSPKFDRSGYQFSKVFRFSMFKEFLMSGLAAKYFVLNNAGSLIPTMAVSQLRTHFLGRVADPIEVGIAAEGLQEMFVRGYSPDKDWETNYDFREILKKLSDWKALPRDKPFASGYLKMFGQELLFGRLDKDTLQNVLQVWYGPDEKIPSIRRLISSLQTGIGRQWTKALLLSEIRCIVPTCVGFPMETSFYYSSVTKVAGNVQAQITPSPRSDFRLTELLNSNVRLRSKMSLSMAKHMTFVIGINTNMIQAGLEAHTKVNAHVPVNVVATIQMKEKSIKAEIPPCKEETNLIIVSSKTFAVTRNIEDLAASKMTPVLLPEAVPDIMKMSFDSDSASGETDNIRDRQSVEDVSSGNSFSFGHPSSGKEPFIQSMCSNASTFGVQVCIEKKSVHAAFIRNVPLYNAIGEHALRMSFKPVYSDVPIEKIQVTIQAGDQAPTKMVRLVTFEDPERQESSRKEVMKRVKKILDDTDNQATRNSRSSSSSASSISESSESTTSTPSSSDSDNRASQGDPQINLKSRQSKANEKKFYPFGDSSSSGSSSSSSSSSSSSSDSSSSSRSSSSSDSSSSSSSSSSSSSSKSKSSSRSSKSNRSSSSSNSKDSSSSSSKSNSKGSSSSSSKASGTRQKAKKQSKTTSFPHASAAEGERSVHEQKQETQSSSSSSSRASSNSRSTSSSTSSSSESSGVSHRQWKQDREAETKRVKSQFNSHSSYDIPNEWETYLPKVYRLRFRSAHTHWHSGHRTSSSSSSSSSESGSSHSNSSSSDSSSRRSHMSDSSSSSSSHRHGEKAAHSSRRSPTSRAASAHHRPGSSLTRERNFLGDVIPPGITIVAQAVRSDNRNQGYQATAYVRSDAAKVDVQLVVVQLAETNWKACADAVILPLKAQARMRWGKECRDYRIAALATTGQMARKLAVQLKVQWGIIPSWIKKTSTALMRYVPGVALVLGFSEAHQRNPSRELIVRAVATSPRSIDTVIKVPGVTLYYQGLRVPFTLALGASSSSYETRDITAWNFLPEIASQIAQEDQSTCEVSKGDFKTFDRMSFTCSFNKSCNVVVAQDCTEHPKFIITTRKVDHQSLSREVHINTSSANITICPAADSSLLVTCNKESVLSDSGVSEYEKDNIKIYKNGKTVIVEAPIHGLKNVNFDGEILKVTVASWMRGKTCGVCGNNDREKHNELLMPNHKLAHSCSAFVHSWVLLEETCSGGCKLQRRYVKLNRNPTIDGEESTCYSVDPVLKCMKDCTPIEKTSVKVGFHCFPKATAVSLLEWQRSSDKKSASEDVVESVDADIDCTCTGDCS.

An N-terminal signal peptide occupies residues 1 to 15 (MRGLISALVLTLVGS). The 640-residue stretch at 24–663 (FGENKVYTYN…AGSLIPTMAV (640 aa)) folds into the Vitellogenin domain. A glycan (N-linked (GlcNAc...) asparagine) is linked at Asn163. The disordered stretch occupies residues 948-972 (DSASGETDNIRDRQSVEDVSSGNSF). Asn991 is a glycosylation site (N-linked (GlcNAc...) asparagine). 2 disordered regions span residues 1080–1329 (KILD…SYDI) and 1351–1432 (HWHS…RERN). Composition is skewed to low complexity over residues 1092–1124 (NSRS…NRAS) and 1150–1235 (SSSS…SSSK). Asn1206 carries an N-linked (GlcNAc...) asparagine glycan. A compositionally biased stretch (basic and acidic residues) spans 1259–1269 (EGERSVHEQKQ). A compositionally biased stretch (low complexity) spans 1273–1299 (SSSSSSSRASSNSRSTSSSTSSSSESS). Residues 1306–1316 (WKQDREAETKR) are compositionally biased toward basic and acidic residues. Residues 1319-1328 (SQFNSHSSYD) are compositionally biased toward polar residues. Low complexity predominate over residues 1357–1381 (RTSSSSSSSSSESGSSHSNSSSSDS). The N-linked (GlcNAc...) asparagine glycan is linked to Asn1375. The span at 1397–1409 (SHRHGEKAAHSSR) shows a compositional bias: basic residues. Positions 1640-1818 (STCEVSKGDF…SWVLLEETCS (179 aa)) constitute a VWFD domain. 2 disulfide bridges follow: Cys1642/Cys1781 and Cys1665/Cys1817. N-linked (GlcNAc...) asparagine glycosylation is found at Asn1662, Asn1698, and Asn1703.

Phosvitin, an egg yolk storage protein, is one of the most highly phosphorylated (10%) proteins in nature. Post-translationally, cathepsin D is responsible for intraoocytic processing of vitellogenin. In terms of processing, may contain intrachain disulfide bonds. Produced by the liver, secreted into the blood and then sequestered by receptor mediated endocytosis into growing oocytes, where it is generally cleaved, giving rise to the respective yolk components.

Its function is as follows. Precursor of the egg-yolk proteins that are sources of nutrients during early development of oviparous organisms. In terms of biological role, phosvitin is believed to be of importance in sequestering calcium, iron and other cations for the developing embryo. The polypeptide is Vitellogenin-1 (VTG1) (Gallus gallus (Chicken)).